The chain runs to 78 residues: Acyl carrier protein (78 aa).

Residues 2–77 (DNIVERVKKI…QAVDYILAGK (76 aa)) form the Carrier domain. Serine 37 is modified (O-(pantetheine 4'-phosphoryl)serine).

It belongs to the acyl carrier protein (ACP) family. Post-translationally, 4'-phosphopantetheine is transferred from CoA to a specific serine of apo-ACP by AcpS. This modification is essential for activity because fatty acids are bound in thioester linkage to the sulfhydryl of the prosthetic group.

The protein localises to the cytoplasm. The protein operates within lipid metabolism; fatty acid biosynthesis. Its function is as follows. Carrier of the growing fatty acid chain in fatty acid biosynthesis. The chain is Acyl carrier protein from Dechloromonas aromatica (strain RCB).